We begin with the raw amino-acid sequence, 473 residues long: Photosystem II CP43 reaction center protein (473 aa).

The propeptide occupies 1–14 (MKTLYSLRRFYPVE). N-acetylthreonine is present on Thr-15. Thr-15 bears the Phosphothreonine mark. Helical transmembrane passes span 69–93 (LFEV…PHLA), 134–155 (LLGP…KDRN), 178–200 (KALY…RKIT), 255–275 (KPFA…LSYS), and 291–312 (WFNN…ASQA). Residue Glu-367 coordinates [CaMn4O5] cluster. A helical transmembrane segment spans residues 447-471 (RARAAAAGFEKGIDRDFEPVLSMTP).

It belongs to the PsbB/PsbC family. PsbC subfamily. As to quaternary structure, PSII is composed of 1 copy each of membrane proteins PsbA, PsbB, PsbC, PsbD, PsbE, PsbF, PsbH, PsbI, PsbJ, PsbK, PsbL, PsbM, PsbT, PsbX, PsbY, PsbZ, Psb30/Ycf12, at least 3 peripheral proteins of the oxygen-evolving complex and a large number of cofactors. It forms dimeric complexes. Binds multiple chlorophylls and provides some of the ligands for the Ca-4Mn-5O cluster of the oxygen-evolving complex. It may also provide a ligand for a Cl- that is required for oxygen evolution. PSII binds additional chlorophylls, carotenoids and specific lipids. is required as a cofactor.

The protein localises to the plastid. It is found in the chloroplast thylakoid membrane. In terms of biological role, one of the components of the core complex of photosystem II (PSII). It binds chlorophyll and helps catalyze the primary light-induced photochemical processes of PSII. PSII is a light-driven water:plastoquinone oxidoreductase, using light energy to abstract electrons from H(2)O, generating O(2) and a proton gradient subsequently used for ATP formation. This is Photosystem II CP43 reaction center protein from Piper cenocladum (Ant piper).